A 760-amino-acid polypeptide reads, in one-letter code: Ring-infected erythrocyte surface antigen (760 aa).

The disordered stretch occupies residues 214–300 (DTSQEESVEE…SDVQQTSEAA (87 aa)). Positions 216-230 (SQEESVEENEEEHTV) are enriched in acidic residues. Positions 231-242 (DDEHVEEHTADD) are enriched in basic and acidic residues. Residues 243–256 (EHVEEPTVADDEHV) show a composition bias toward acidic residues. Residues 262-288 (ADEHVEEPTVAEEHVEEPTVAEEHVEE) are compositionally biased toward basic and acidic residues. Residues 307–375 (DTLYYDILGV…KRWYNKYGYD (69 aa)) form the J domain. N-linked (GlcNAc...) asparagine glycosylation is found at Asn425, Asn559, and Asn563. Positions 683 to 692 (EHDAEENVEH) are enriched in basic and acidic residues. Residues 683 to 738 (EHDAEENVEHDAEENAEENVEENVEEVEENVEENVEENVGEKKMRREEKKKRVQEP) form a disordered region. Acidic residues predominate over residues 693–720 (DAEENAEENVEENVEEVEENVEENVEEN).

The protein localises to the cell membrane. Its function is as follows. May disrupt the normal intermolecular interactions of the cytoplasmic domain of band 3 and thereby facilitate the invagination of the red cell membrane which is necessary for the formation of the parasitophorous vacuole. The polypeptide is Ring-infected erythrocyte surface antigen (RESA) (Plasmodium falciparum (isolate NF7 / Ghana)).